The chain runs to 949 residues: Syndetin (949 aa).

A disordered region spans residues 1–28 (MQKIKSLMTRQGLRSPQESVHDLSPIEN). The segment covering 8 to 18 (MTRQGLRSPQE) has biased composition (polar residues). Coiled coils occupy residues 82-104 (SLQE…LERV) and 198-226 (YSCI…LSKI). Positions 509-581 (FEIQADSKDD…ETLRSRKKSD (73 aa)) are disordered. Residues 569–581 (VSRETLRSRKKSD) are compositionally biased toward basic and acidic residues.

Belongs to the syndetin family. As to quaternary structure, component of the endosome-associated retrograde protein (EARP) complex.

The protein resides in the recycling endosome. It localises to the membrane. Functionally, acts as a component of the EARP complex that is involved in endocytic recycling. The EARP complex associates with Rab4-positive endosomes and promotes recycling of internalized transferrin receptor (TFRC) to the plasma membrane. The protein is Syndetin of Gallus gallus (Chicken).